A 533-amino-acid chain; its full sequence is Bifunctional purine biosynthesis protein PurH (533 aa).

The region spanning 1–148 (MQPNRPIRQA…KNHQDVAIVV (148 aa)) is the MGS-like domain.

It belongs to the PurH family.

It catalyses the reaction (6R)-10-formyltetrahydrofolate + 5-amino-1-(5-phospho-beta-D-ribosyl)imidazole-4-carboxamide = 5-formamido-1-(5-phospho-D-ribosyl)imidazole-4-carboxamide + (6S)-5,6,7,8-tetrahydrofolate. The enzyme catalyses IMP + H2O = 5-formamido-1-(5-phospho-D-ribosyl)imidazole-4-carboxamide. It functions in the pathway purine metabolism; IMP biosynthesis via de novo pathway; 5-formamido-1-(5-phospho-D-ribosyl)imidazole-4-carboxamide from 5-amino-1-(5-phospho-D-ribosyl)imidazole-4-carboxamide (10-formyl THF route): step 1/1. The protein operates within purine metabolism; IMP biosynthesis via de novo pathway; IMP from 5-formamido-1-(5-phospho-D-ribosyl)imidazole-4-carboxamide: step 1/1. In Pasteurella multocida (strain Pm70), this protein is Bifunctional purine biosynthesis protein PurH.